A 261-amino-acid chain; its full sequence is UPF0246 protein Vapar_1301 (261 aa).

The protein belongs to the UPF0246 family.

This Variovorax paradoxus (strain S110) protein is UPF0246 protein Vapar_1301.